Here is a 207-residue protein sequence, read N- to C-terminus: Casparian strip membrane protein 1 (207 aa).

The span at M1–E12 shows a compositional bias: polar residues. Residues M1–K20 form a disordered region. The Cytoplasmic portion of the chain corresponds to M1–G48. Residues L49–I69 traverse the membrane as a helical segment. The Extracellular segment spans residues A70–T98. A helical transmembrane segment spans residues F99 to I119. Residues V120 to R131 are Cytoplasmic-facing. The chain crosses the membrane as a helical span at residues V132–T152. The Extracellular segment spans residues A153–G184. A helical transmembrane segment spans residues A185–F205. Topologically, residues A206 to L207 are cytoplasmic.

The protein belongs to the Casparian strip membrane proteins (CASP) family. Homodimer and heterodimers.

Its subcellular location is the cell membrane. Functionally, regulates membrane-cell wall junctions and localized cell wall deposition. Required for establishment of the Casparian strip membrane domain (CSD) and the subsequent formation of Casparian strips, a cell wall modification of the root endodermis that determines an apoplastic barrier between the intraorganismal apoplasm and the extraorganismal apoplasm and prevents lateral diffusion. The polypeptide is Casparian strip membrane protein 1 (Cynara cardunculus var. scolymus (Globe artichoke)).